Consider the following 500-residue polypeptide: 4-aminobutyrate aminotransferase, mitochondrial (500 aa).

The transit peptide at 1 to 27 directs the protein to the mitochondrion; it reads MAFLLTTRRLVCSSQKNLHLFTPGSRY. Residue cysteine 163 participates in [2Fe-2S] cluster binding. Residue 164–165 coordinates pyridoxal 5'-phosphate; the sequence is GS. Position 166 (cysteine 166) interacts with [2Fe-2S] cluster. Position 220 (arginine 220) interacts with substrate. N6-succinyllysine is present on lysine 231. The residue at position 252 (lysine 252) is an N6-acetyllysine; alternate. Position 252 is an N6-succinyllysine; alternate (lysine 252). An N6-acetyllysine mark is found at lysine 279 and lysine 318. Lysine 357 is subject to N6-(pyridoxal phosphate)lysine. Threonine 381 contacts pyridoxal 5'-phosphate. Lysine 413 is modified (N6-acetyllysine; alternate). Lysine 413 is subject to N6-succinyllysine; alternate. 2 positions are modified to N6-acetyllysine: lysine 452 and lysine 470.

Belongs to the class-III pyridoxal-phosphate-dependent aminotransferase family. In terms of assembly, homodimer; disulfide-linked. Requires pyridoxal 5'-phosphate as cofactor. [2Fe-2S] cluster serves as cofactor.

It localises to the mitochondrion matrix. The catalysed reaction is 4-aminobutanoate + 2-oxoglutarate = succinate semialdehyde + L-glutamate. It catalyses the reaction (S)-3-amino-2-methylpropanoate + 2-oxoglutarate = 2-methyl-3-oxopropanoate + L-glutamate. Catalyzes the conversion of gamma-aminobutyrate and L-beta-aminoisobutyrate to succinate semialdehyde and methylmalonate semialdehyde, respectively. Can also convert delta-aminovalerate and beta-alanine. In Rattus norvegicus (Rat), this protein is 4-aminobutyrate aminotransferase, mitochondrial.